Consider the following 981-residue polypeptide: Peroxisomal ATPase PEX6 (981 aa).

Arg119 is modified (omega-N-methylarginine). Residues 471–478 (GPPGSGKT) and 745–752 (GPPGTGKT) contribute to the ATP site.

Belongs to the AAA ATPase family. In terms of assembly, interacts with PEX1; forming the PEX1-PEX6 AAA ATPase complex, which is composed of a heterohexamer formed by a trimer of PEX1-PEX6 dimers. Interacts with PEX26; interaction is direct and promotes recruitment to peroxisomal membranes. Interacts with ZFAND6. In the teeth, expressed in ameloblasts and odontoblasts. Expressed in the retina, at higher levels in the ganglion cell layer and photoreceptor layer at the joint between the outer and inner segments.

The protein resides in the cytoplasm. It localises to the cytosol. It is found in the peroxisome membrane. Its subcellular location is the cell projection. The protein localises to the cilium. The protein resides in the photoreceptor outer segment. It carries out the reaction ATP + H2O = ADP + phosphate + H(+). Functionally, component of the PEX1-PEX6 AAA ATPase complex, a protein dislocase complex that mediates the ATP-dependent extraction of the PEX5 receptor from peroxisomal membranes, an essential step for PEX5 recycling. Specifically recognizes PEX5 monoubiquitinated at 'Cys-11', and pulls it out of the peroxisome lumen through the PEX2-PEX10-PEX12 retrotranslocation channel. Extraction by the PEX1-PEX6 AAA ATPase complex is accompanied by unfolding of the TPR repeats and release of bound cargo from PEX5. The protein is Peroxisomal ATPase PEX6 of Mus musculus (Mouse).